A 450-amino-acid polypeptide reads, in one-letter code: UDP-N-acetylmuramoylalanine--D-glutamate ligase (450 aa).

Residue glycine 119–threonine 125 participates in ATP binding.

Belongs to the MurCDEF family.

It is found in the cytoplasm. The enzyme catalyses UDP-N-acetyl-alpha-D-muramoyl-L-alanine + D-glutamate + ATP = UDP-N-acetyl-alpha-D-muramoyl-L-alanyl-D-glutamate + ADP + phosphate + H(+). Its pathway is cell wall biogenesis; peptidoglycan biosynthesis. Its function is as follows. Cell wall formation. Catalyzes the addition of glutamate to the nucleotide precursor UDP-N-acetylmuramoyl-L-alanine (UMA). In Streptococcus pneumoniae (strain Hungary19A-6), this protein is UDP-N-acetylmuramoylalanine--D-glutamate ligase.